A 441-amino-acid chain; its full sequence is Ribulose bisphosphate carboxylase large chain (441 aa).

An N6,N6,N6-trimethyllysine modification is found at lysine 5. Residues asparagine 114 and threonine 164 each coordinate substrate. Lysine 166 functions as the Proton acceptor in the catalytic mechanism. Position 168 (lysine 168) interacts with substrate. Mg(2+)-binding residues include lysine 192, aspartate 194, and glutamate 195. Lysine 192 is modified (N6-carboxylysine). The Proton acceptor role is filled by histidine 285. 3 residues coordinate substrate: arginine 286, histidine 318, and serine 370.

The protein belongs to the RuBisCO large chain family. Type I subfamily. In terms of assembly, heterohexadecamer of 8 large chains and 8 small chains; disulfide-linked. The disulfide link is formed within the large subunit homodimers. Mg(2+) is required as a cofactor. In terms of processing, the disulfide bond which can form in the large chain dimeric partners within the hexadecamer appears to be associated with oxidative stress and protein turnover.

The protein localises to the plastid. It localises to the chloroplast. It carries out the reaction 2 (2R)-3-phosphoglycerate + 2 H(+) = D-ribulose 1,5-bisphosphate + CO2 + H2O. It catalyses the reaction D-ribulose 1,5-bisphosphate + O2 = 2-phosphoglycolate + (2R)-3-phosphoglycerate + 2 H(+). Functionally, ruBisCO catalyzes two reactions: the carboxylation of D-ribulose 1,5-bisphosphate, the primary event in carbon dioxide fixation, as well as the oxidative fragmentation of the pentose substrate in the photorespiration process. Both reactions occur simultaneously and in competition at the same active site. This chain is Ribulose bisphosphate carboxylase large chain, found in Drosera petiolaris (Woolly sundew).